Consider the following 404-residue polypeptide: MTSLSVFRDVPTAQKLEGSLLKIYRQDGYPSKLFLAYKVCMTEEGHPWVSLVVHKTRLQIAEDPSLDYEYLPLVGLKSFIQSSLELLFGKHSEAIAEKRVGGVHIVGESGAFQLGAQFLKTWRKNVKIVCIVSCQKEQCGLIFQDMGFIVYEYSIWNASDLCSDPSMFVEVLQHIPVGSILVIGNITDCKFTQNQWTKLMSIIKSKQIFPFFDIPCQGLSTGDLEEDTKILQYFVSLGLEFFCSQSLSKNFGIYDEGVGILVVAALSNQHLLCVLSQLMDYVQALWGNPPATGARIITSILCNPALFGEWKQSLKGVVENMMLIKEKVKEKLRLLGTPGSWDHITRQSGTHGYLGLTYQQVEFLVKKKHIYLPKTSRINFTCINARNIDYITQSIHEAVMLTEG.

Residue Lys249 is modified to N6-(pyridoxal phosphate)lysine.

It belongs to the class-I pyridoxal-phosphate-dependent aminotransferase family. Homodimer. Pyridoxal 5'-phosphate is required as a cofactor.

The protein resides in the cytoplasm. It catalyses the reaction L-aspartate + 2-oxoglutarate = oxaloacetate + L-glutamate. This Mus musculus (Mouse) protein is Putative aspartate aminotransferase, cytoplasmic 2 (Got1l1).